We begin with the raw amino-acid sequence, 393 residues long: Chorismate synthase (393 aa).

NADP(+) is bound by residues R40 and R46. FMN is bound by residues 129-131 (RAS), 251-252 (QA), G301, 316-320 (KPIST), and R342.

Belongs to the chorismate synthase family. As to quaternary structure, homotetramer. The cofactor is FMNH2.

The catalysed reaction is 5-O-(1-carboxyvinyl)-3-phosphoshikimate = chorismate + phosphate. The protein operates within metabolic intermediate biosynthesis; chorismate biosynthesis; chorismate from D-erythrose 4-phosphate and phosphoenolpyruvate: step 7/7. Catalyzes the anti-1,4-elimination of the C-3 phosphate and the C-6 proR hydrogen from 5-enolpyruvylshikimate-3-phosphate (EPSP) to yield chorismate, which is the branch point compound that serves as the starting substrate for the three terminal pathways of aromatic amino acid biosynthesis. This reaction introduces a second double bond into the aromatic ring system. The chain is Chorismate synthase from Koribacter versatilis (strain Ellin345).